The primary structure comprises 209 residues: Thiamine-phosphate synthase (209 aa).

Residues 36 to 40 and asparagine 68 contribute to the 4-amino-2-methyl-5-(diphosphooxymethyl)pyrimidine site; that span reads QYRDK. Residues aspartate 69 and aspartate 87 each coordinate Mg(2+). Threonine 106 is a 4-amino-2-methyl-5-(diphosphooxymethyl)pyrimidine binding site. 133–135 lines the 2-[(2R,5Z)-2-carboxy-4-methylthiazol-5(2H)-ylidene]ethyl phosphate pocket; that stretch reads SST. Lysine 136 provides a ligand contact to 4-amino-2-methyl-5-(diphosphooxymethyl)pyrimidine. Glycine 163 contacts 2-[(2R,5Z)-2-carboxy-4-methylthiazol-5(2H)-ylidene]ethyl phosphate.

Belongs to the thiamine-phosphate synthase family. Requires Mg(2+) as cofactor.

The enzyme catalyses 2-[(2R,5Z)-2-carboxy-4-methylthiazol-5(2H)-ylidene]ethyl phosphate + 4-amino-2-methyl-5-(diphosphooxymethyl)pyrimidine + 2 H(+) = thiamine phosphate + CO2 + diphosphate. The catalysed reaction is 2-(2-carboxy-4-methylthiazol-5-yl)ethyl phosphate + 4-amino-2-methyl-5-(diphosphooxymethyl)pyrimidine + 2 H(+) = thiamine phosphate + CO2 + diphosphate. It carries out the reaction 4-methyl-5-(2-phosphooxyethyl)-thiazole + 4-amino-2-methyl-5-(diphosphooxymethyl)pyrimidine + H(+) = thiamine phosphate + diphosphate. It participates in cofactor biosynthesis; thiamine diphosphate biosynthesis; thiamine phosphate from 4-amino-2-methyl-5-diphosphomethylpyrimidine and 4-methyl-5-(2-phosphoethyl)-thiazole: step 1/1. Its function is as follows. Condenses 4-methyl-5-(beta-hydroxyethyl)thiazole monophosphate (THZ-P) and 2-methyl-4-amino-5-hydroxymethyl pyrimidine pyrophosphate (HMP-PP) to form thiamine monophosphate (TMP). The sequence is that of Thiamine-phosphate synthase from Pseudomonas aeruginosa (strain UCBPP-PA14).